The sequence spans 177 residues: Protein OPG036 (177 aa).

Belongs to the poxviridae OPG036 family.

Its subcellular location is the host nucleus. Plays a role in the inhibition of host innate immune response. Within the host nucleus, inhibits activation of interferon-beta promoter by inhibiting IRF3 activation. The protein is Protein OPG036 (OPG036) of Homo sapiens (Human).